Consider the following 361-residue polypeptide: Probable galacturonosyltransferase-like 7 (361 aa).

The helical; Signal-anchor for type II membrane protein transmembrane segment at 1-21 (MLWIMRFSGLFSAALVIIVLS) threads the bilayer. The Lumenal portion of the chain corresponds to 22–361 (PSLQSFPPAE…PYDLYGHYSR (340 aa)). N217 carries N-linked (GlcNAc...) asparagine glycosylation.

It belongs to the glycosyltransferase 8 family.

The protein localises to the golgi apparatus membrane. It participates in glycan metabolism; pectin biosynthesis. Its function is as follows. May be involved in pectin and/or xylans biosynthesis in cell walls. The protein is Probable galacturonosyltransferase-like 7 (GATL7) of Arabidopsis thaliana (Mouse-ear cress).